A 623-amino-acid chain; its full sequence is UvrABC system protein C (623 aa).

Residues 12-91 (PSPGVYLMKS…IKQHRPKYNI (80 aa)) enclose the GIY-YIG domain. The UVR domain maps to 201 to 236 (TEVARLYRSKMNLAAEQMRYEDAARYRDLLRAIEVT). A disordered region spans residues 603–623 (RLHGSPLPNPPPPGEGAMDRK).

Belongs to the UvrC family. In terms of assembly, interacts with UvrB in an incision complex.

The protein localises to the cytoplasm. Its function is as follows. The UvrABC repair system catalyzes the recognition and processing of DNA lesions. UvrC both incises the 5' and 3' sides of the lesion. The N-terminal half is responsible for the 3' incision and the C-terminal half is responsible for the 5' incision. The polypeptide is UvrABC system protein C (Citrifermentans bemidjiense (strain ATCC BAA-1014 / DSM 16622 / JCM 12645 / Bem) (Geobacter bemidjiensis)).